We begin with the raw amino-acid sequence, 396 residues long: Queuine tRNA-ribosyltransferase catalytic subunit 1 (396 aa).

The Proton acceptor role is filled by Asp99. Residues 99–103 (DSGGF), Asp153, Gln196, and Gly223 contribute to the queuine site. The segment at 254 to 260 (GVGYATD) is RNA binding. The Nucleophile role is filled by Asp273. The tract at residues 278–282 (TRTAR) is RNA binding; important for wobble base 34 recognition. 4 residues coordinate Zn(2+): Cys311, Cys313, Cys316, and His341.

This sequence belongs to the queuine tRNA-ribosyltransferase family. As to quaternary structure, heterodimer of a catalytic subunit qtrt1 and an accessory subunit qtrt2. It depends on Zn(2+) as a cofactor.

The protein resides in the cytoplasm. It localises to the mitochondrion outer membrane. It carries out the reaction guanosine(34) in tRNA + queuine = queuosine(34) in tRNA + guanine. In terms of biological role, catalytic subunit of the queuine tRNA-ribosyltransferase (TGT) that catalyzes the base-exchange of a guanine (G) residue with queuine (Q) at position 34 (anticodon wobble position) in tRNAs with GU(N) anticodons (tRNA-Asp, -Asn, -His and -Tyr), resulting in the hypermodified nucleoside queuosine (7-(((4,5-cis-dihydroxy-2-cyclopenten-1-yl)amino)methyl)-7-deazaguanosine). Catalysis occurs through a double-displacement mechanism. The nucleophile active site attacks the C1' of nucleotide 34 to detach the guanine base from the RNA, forming a covalent enzyme-RNA intermediate. The proton acceptor active site deprotonates the incoming queuine, allowing a nucleophilic attack on the C1' of the ribose to form the product. The chain is Queuine tRNA-ribosyltransferase catalytic subunit 1 from Xenopus laevis (African clawed frog).